Here is a 536-residue protein sequence, read N- to C-terminus: Atrial natriuretic peptide receptor 3 (536 aa).

Residues 1–26 (MRSLLLFTFSACVLLARVLLAGGASS) form the signal peptide. The propeptide occupies 27-40 (GAGDTRPGSRRRAR). The Extracellular segment spans residues 41 to 478 (EALAAQKIEV…KSSGGLEESA (438 aa)). An N-linked (GlcNAc...) asparagine glycan is attached at asparagine 81. Positions 101, 130, and 131 each coordinate chloride. Disulfide bonds link cysteine 103–cysteine 131 and cysteine 208–cysteine 256. Residues asparagine 288 and asparagine 389 are each glycosylated (N-linked (GlcNAc...) asparagine). A helical transmembrane segment spans residues 479 to 499 (VTGIVVGALLGAGLLMAFYFF). The Cytoplasmic portion of the chain corresponds to 500–536 (RKKYRITIERRNQQEESNIGKHRELREDSIRSHFSVA).

Belongs to the ANF receptor family. In terms of assembly, homodimer; disulfide-linked. Interacts with OSTN.

It is found in the cell membrane. Its function is as follows. Receptor for the natriuretic peptide hormones, binding with similar affinities atrial natriuretic peptide NPPA/ANP, brain natriuretic peptide NPPB/BNP, and C-type natriuretic peptide NPPC/CNP. May function as a clearance receptor for NPPA, NPPB and NPPC, regulating their local concentrations and effects. Acts as a regulator of osteoblast differentiation and bone growth by binding to its ligand osteocrin, thereby preventing binding between NPR3/NPR-C and natriuretic peptides, leading to increase cGMP production. This is Atrial natriuretic peptide receptor 3 (Npr3) from Mus musculus (Mouse).